A 466-amino-acid chain; its full sequence is Cysteine--tRNA ligase (466 aa).

A Zn(2+)-binding site is contributed by cysteine 27. Positions 29–39 (PTVYNYIHIGN) match the 'HIGH' region motif. Positions 207, 232, and 236 each coordinate Zn(2+). The 'KMSKS' region signature appears at 264–268 (KMSKS). Lysine 267 is an ATP binding site.

It belongs to the class-I aminoacyl-tRNA synthetase family. In terms of assembly, monomer. It depends on Zn(2+) as a cofactor.

Its subcellular location is the cytoplasm. It carries out the reaction tRNA(Cys) + L-cysteine + ATP = L-cysteinyl-tRNA(Cys) + AMP + diphosphate. The sequence is that of Cysteine--tRNA ligase from Thermoanaerobacter pseudethanolicus (strain ATCC 33223 / 39E) (Clostridium thermohydrosulfuricum).